The following is a 196-amino-acid chain: UPF0200 protein MK0400 (196 aa).

7–14 (GMPGAGKG) contributes to the ATP binding site.

Belongs to the UPF0200 family.

This is UPF0200 protein MK0400 from Methanopyrus kandleri (strain AV19 / DSM 6324 / JCM 9639 / NBRC 100938).